A 279-amino-acid chain; its full sequence is MSAEVTLHDNIHYDLSADCQHCFGLCCVALPYAKSADFAFDKDGGTPCRNLQSNYQCSIHKDLREKGFRGCSAYECFGAGQKVSQITYEGKDWRNSPETANQMFDVFPIMQQLHEMLWYLHEALSIDIAKPIHSELRTTFEKIERLTRLSKERLLTLQVDEHRAEVNEWLLKTSELVRAQARHPKLPKKVSRGSVLIGAKLKGLDLRGANLRGALLIAADLRNADLRMTDFIGADMRDADLSGADLTGSIFLTQAQVNAANGDSNTKLPLSVRTPAHWK.

This is an uncharacterized protein from Bacillus subtilis (strain 168).